A 465-amino-acid polypeptide reads, in one-letter code: GTPase Der (465 aa).

2 consecutive EngA-type G domains span residues 3-167 (PLVA…PEEG) and 179-352 (VRIA…ASAT). GTP-binding positions include 9–16 (GRPNVGKS), 57–61 (DTGGI), 119–122 (NKID), 185–192 (GRPNVGKS), 232–236 (DTAGL), and 297–300 (NKWD). A KH-like domain is found at 353 to 437 (HEFSTSEVNQ…PVRFIFREGA (85 aa)).

It belongs to the TRAFAC class TrmE-Era-EngA-EngB-Septin-like GTPase superfamily. EngA (Der) GTPase family. Associates with the 50S ribosomal subunit.

Its function is as follows. GTPase that plays an essential role in the late steps of ribosome biogenesis. The protein is GTPase Der of Xanthomonas axonopodis pv. citri (strain 306).